The primary structure comprises 365 residues: PHD finger protein 6 (365 aa).

Residue Ser2 is modified to N-acetylserine. 2 consecutive short sequence motifs (nuclear localization signal) follow at residues 13 to 16 and 129 to 133; these read RQRK and RKHKK. Residues 14 to 52 form a C2HC pre-PHD-type 1 zinc finger; that stretch reads QRKCGFCKSNRDKECGQLLISENQKVAAHHKCMLFSSAL. The tract at residues 14–132 is extended PHD1 domain (ePHD1); that stretch reads QRKCGFCKSN…IYMVYCRKHK (119 aa). The PHD-type 1 zinc-finger motif lies at 80–132; the sequence is LMCSLCHCPGATIGCDVKTCHRTYHYHCALHDKAQIREKPSQGIYMVYCRKHK. Residues Ser138, Ser145, and Ser155 each carry the phosphoserine modification. A disordered region spans residues 139–211; it reads EADLEESFNE…RSSPSDTRPK (73 aa). The short motif at 157-169 is the Nucleolar localization signal element; it reads KSKKKSRKGRPRK. Residues 157 to 171 are compositionally biased toward basic residues; the sequence is KSKKKSRKGRPRKTN. A Glycyl lysine isopeptide (Lys-Gly) (interchain with G-Cter in SUMO2) cross-link involves residue Lys173. Ser183 and Ser199 each carry phosphoserine. The C2HC pre-PHD-type 2 zinc-finger motif lies at 209–249; sequence RPKCGFCHVGEEENQARGKLHIFNAKKAAAHYKCMLFSSGT. Residues 209-330 are extended PHD2 domain (ePHD2); that stretch reads RPKCGFCHVG…IYKLYCKNHS (122 aa). Residue Lys227 forms a Glycyl lysine isopeptide (Lys-Gly) (interchain with G-Cter in SUMO2) linkage. The segment at 278 to 330 adopts a PHD-type 2 zinc-finger fold; that stretch reads MKCTLCSQPGATIGCEIKACVKTYHYHCGVQDKAKYIENMSRGIYKLYCKNHS. The interval 330–365 is disordered; the sequence is SGNDERDEEDEERESKSRGKVEIDQQQLTQQQLNGN. A compositionally biased stretch (basic and acidic residues) spans 342–352; that stretch reads RESKSRGKVEI. Over residues 354–365 the composition is skewed to low complexity; sequence QQQLTQQQLNGN. Thr358 carries the phosphothreonine modification.

Interacts with UBTF. Interacts with the NuRD complex component RBBP4 (via the nucleolar localization motif), the interaction mediates transcriptional repression activity.

The protein resides in the nucleus. It localises to the nucleolus. The protein localises to the chromosome. Its subcellular location is the centromere. It is found in the kinetochore. In terms of biological role, transcriptional regulator that associates with ribosomal RNA promoters and suppresses ribosomal RNA (rRNA) transcription. The chain is PHD finger protein 6 (PHF6) from Bos taurus (Bovine).